Consider the following 119-residue polypeptide: Platelet basic protein (119 aa).

The signal sequence occupies residues 1–33 (MSLRLGAISSCTTSSPFPVLQVLLPLSLLLTTL). Residues 34-39 (VPATMG) constitute a propeptide that is removed on maturation. 2 disulfides stabilise this stretch: Cys-54–Cys-80 and Cys-56–Cys-96.

Its subcellular location is the secreted. In terms of biological role, chemoattractant factor for neutrophils. In Sus scrofa (Pig), this protein is Platelet basic protein (PPBP).